We begin with the raw amino-acid sequence, 370 residues long: Uroporphyrinogen decarboxylase (370 aa).

Residues 29 to 33 (RQAGR), aspartate 79, tyrosine 155, serine 210, and histidine 342 contribute to the substrate site.

Belongs to the uroporphyrinogen decarboxylase family. In terms of assembly, homodimer.

The protein resides in the cytoplasm. It carries out the reaction uroporphyrinogen III + 4 H(+) = coproporphyrinogen III + 4 CO2. The protein operates within porphyrin-containing compound metabolism; protoporphyrin-IX biosynthesis; coproporphyrinogen-III from 5-aminolevulinate: step 4/4. Functionally, catalyzes the decarboxylation of four acetate groups of uroporphyrinogen-III to yield coproporphyrinogen-III. The chain is Uroporphyrinogen decarboxylase from Variovorax paradoxus (strain S110).